The sequence spans 128 residues: Ribonuclease P protein component (128 aa).

The protein belongs to the RnpA family. Consists of a catalytic RNA component (M1 or rnpB) and a protein subunit.

It carries out the reaction Endonucleolytic cleavage of RNA, removing 5'-extranucleotides from tRNA precursor.. Functionally, RNaseP catalyzes the removal of the 5'-leader sequence from pre-tRNA to produce the mature 5'-terminus. It can also cleave other RNA substrates such as 4.5S RNA. The protein component plays an auxiliary but essential role in vivo by binding to the 5'-leader sequence and broadening the substrate specificity of the ribozyme. This chain is Ribonuclease P protein component, found in Synechococcus sp. (strain CC9902).